We begin with the raw amino-acid sequence, 189 residues long: dCTP deaminase (189 aa).

DCTP is bound by residues 112–117 (KSTYAR), 136–138 (TLE), Q157, Y171, and Q181. E138 serves as the catalytic Proton donor/acceptor.

The protein belongs to the dCTP deaminase family. Homotrimer.

It catalyses the reaction dCTP + H2O + H(+) = dUTP + NH4(+). The protein operates within pyrimidine metabolism; dUMP biosynthesis; dUMP from dCTP (dUTP route): step 1/2. In terms of biological role, catalyzes the deamination of dCTP to dUTP. The protein is dCTP deaminase of Halorhodospira halophila (strain DSM 244 / SL1) (Ectothiorhodospira halophila (strain DSM 244 / SL1)).